Reading from the N-terminus, the 105-residue chain is Thioredoxin (105 aa).

Positions 2-105 (VKQIESKSAF…KLEATINELL (104 aa)) constitute a Thioredoxin domain. The residue at position 3 (lysine 3) is an N6-acetyllysine. Residue lysine 8 is modified to N6-succinyllysine. Residues cysteine 32 and cysteine 35 each act as nucleophile in the active site. Residues cysteine 32 and cysteine 35 are joined by a disulfide bond. N6-acetyllysine is present on lysine 39. S-nitrosocysteine is present on residues cysteine 62 and cysteine 69. The residue at position 73 (cysteine 73) is an S-nitrosocysteine; alternate. An N6-acetyllysine; alternate modification is found at lysine 94. Residue lysine 94 is modified to N6-succinyllysine; alternate.

It belongs to the thioredoxin family. Homodimer; disulfide-linked. Interacts with TXNIP through the redox-active site. Interacts with MAP3K5 and CASP3. Interacts with APEX1; the interaction stimulates the FOS/JUN AP-1 DNA-binding activity in a redox-dependent manner. In the fully reduced protein, both Cys-69 and Cys-73 are nitrosylated in response to nitric oxide (NO). When two disulfide bonds are present in the protein, only Cys-73 is nitrosylated. Cys-73 can serve as donor for nitrosylation of target proteins.

It localises to the nucleus. The protein resides in the cytoplasm. It is found in the secreted. Functionally, participates in various redox reactions through the reversible oxidation of its active center dithiol to a disulfide and catalyzes dithiol-disulfide exchange reactions. Plays a role in the reversible S-nitrosylation of cysteine residues in target proteins, and thereby contributes to the response to intracellular nitric oxide. Nitrosylates the active site Cys of CASP3 in response to nitric oxide (NO), and thereby inhibits caspase-3 activity. Induces the FOS/JUN AP-1 DNA binding activity in ionizing radiation (IR) cells through its oxidation/reduction status and stimulates AP-1 transcriptional activity. This chain is Thioredoxin (TXN), found in Oryctolagus cuniculus (Rabbit).